Consider the following 158-residue polypeptide: Cytochrome c-type biogenesis protein CcmE (158 aa).

The Cytoplasmic segment spans residues M1–R8. The chain crosses the membrane as a helical; Signal-anchor for type II membrane protein span at residues L9–A29. Topologically, residues L30–R158 are periplasmic. The heme site is built by H123 and Y127. Residues A139 to R158 form a disordered region.

The protein belongs to the CcmE/CycJ family.

It localises to the cell inner membrane. Functionally, heme chaperone required for the biogenesis of c-type cytochromes. Transiently binds heme delivered by CcmC and transfers the heme to apo-cytochromes in a process facilitated by CcmF and CcmH. The chain is Cytochrome c-type biogenesis protein CcmE from Maricaulis maris (strain MCS10) (Caulobacter maris).